The primary structure comprises 75 residues: MISAGVDSKDLAKRGESLIRQSTNRYLTTVKIAFRAKQRRFDDFDGLLEESSVKPVHRAIVELSDEQDQPDLLPG.

This sequence belongs to the RNA polymerase subunit omega family. In cyanobacteria the RNAP catalytic core is composed of 2 alpha, 1 beta, 1 beta', 1 gamma and 1 omega subunit. When a sigma factor is associated with the core the holoenzyme is formed, which can initiate transcription.

The catalysed reaction is RNA(n) + a ribonucleoside 5'-triphosphate = RNA(n+1) + diphosphate. Functionally, promotes RNA polymerase assembly. Latches the N- and C-terminal regions of the beta' subunit thereby facilitating its interaction with the beta and alpha subunits. This Synechococcus sp. (strain CC9311) protein is DNA-directed RNA polymerase subunit omega.